Reading from the N-terminus, the 522-residue chain is ATP synthase subunit alpha, mitochondrial (522 aa).

Residue 172 to 179 (GDRQTGKT) coordinates ATP.

It belongs to the ATPase alpha/beta chains family. In terms of assembly, F-type ATPases have 2 components, CF(1) - the catalytic core - and CF(0) - the membrane proton channel. CF(1) has five subunits: alpha(3), beta(3), gamma(1), delta(1), epsilon(1). CF(0) has three main subunits: a, b and c.

The protein resides in the mitochondrion. It is found in the mitochondrion inner membrane. Functionally, mitochondrial membrane ATP synthase (F(1)F(0) ATP synthase or Complex V) produces ATP from ADP in the presence of a proton gradient across the membrane which is generated by electron transport complexes of the respiratory chain. F-type ATPases consist of two structural domains, F(1) - containing the extramembraneous catalytic core, and F(0) - containing the membrane proton channel, linked together by a central stalk and a peripheral stalk. During catalysis, ATP synthesis in the catalytic domain of F(1) is coupled via a rotary mechanism of the central stalk subunits to proton translocation. Subunits alpha and beta form the catalytic core in F(1). Rotation of the central stalk against the surrounding alpha(3)beta(3) subunits leads to hydrolysis of ATP in three separate catalytic sites on the beta subunits. Subunit alpha does not bear the catalytic high-affinity ATP-binding sites. This Acanthamoeba castellanii (Amoeba) protein is ATP synthase subunit alpha, mitochondrial (ATP1).